A 920-amino-acid chain; its full sequence is GTPase activating protein homolog 1 (920 aa).

Low complexity predominate over residues 65 to 87; sequence NLGGLSNDSTNNNSNSNNTIDSS. The disordered stretch occupies residues 65 to 91; sequence NLGGLSNDSTNNNSNSNNTIDSSKPLS. The F-BAR domain occupies 90–344; that stretch reads LSFENDMSDG…FVDIIDPEVD (255 aa). A coiled-coil region spans residues 184 to 276; the sequence is LNEAIKDMEK…EDEYKEQINE (93 aa). Low complexity predominate over residues 403-449; the sequence is TNTITSQSGSTIISNGASQPIEIPSPQPISEQQQIPPQQQQQQQQAQ. Disordered stretches follow at residues 403-468 and 490-518; these read TNTI…PMGR and STSSLLTKDGNSTTSSNTSTSNSNQLSKS. Residues 450-468 show a composition bias toward polar residues; the sequence is VPPTSINQSSSPPVNPMGR. Residues 490-513 show a composition bias toward low complexity; that stretch reads STSSLLTKDGNSTTSSNTSTSNSN. The Rho-GAP domain occupies 533-716; sequence VELEVLIEND…NMIIDSLETK (184 aa). The disordered stretch occupies residues 727–836; the sequence is PIIPDDENSD…VSSNGNNINS (110 aa). The span at 730-741 shows a compositional bias: acidic residues; the sequence is PDDENSDDDDDD. The span at 757–836 shows a compositional bias: low complexity; that stretch reads NDINTTNINN…VSSNGNNINS (80 aa).

It is found in the cytoplasm. Its subcellular location is the contractile vacuole. Rho GTPase-activating protein involved in the signal transduction pathway. Regulator of the contractile vacuole network as well as involved in driving vacuole emptying. This chain is GTPase activating protein homolog 1 (mgp1), found in Dictyostelium discoideum (Social amoeba).